Here is a 381-residue protein sequence, read N- to C-terminus: Chymosin (381 aa).

An N-terminal signal peptide occupies residues 1–16 (MRCLVVLLAVFALSQG). A propeptide spans 17-58 (AEITRIPLYKGKPLRKALKERGLLEDFLQKQQYGVSSEYSGF) (activation peptide). One can recognise a Peptidase A1 domain in the interval 74–378 (YFGKIYLGTP…DRANNLVGLA (305 aa)). D92 is an active-site residue. 2 disulfide bridges follow: C105–C110 and C265–C269. Residue D274 is part of the active site. Cysteines 308 and 341 form a disulfide.

Belongs to the peptidase A1 family. In terms of assembly, monomer.

It carries out the reaction Broad specificity similar to that of pepsin A. Clots milk by cleavage of a single 104-Ser-Phe-|-Met-Ala-107 bond in kappa-chain of casein.. Functionally, chymosin is synthesized in the mucosa of the stomach. The enzyme hydrolyzes casein to paracasein. The chain is Chymosin (CYM) from Ovis aries (Sheep).